A 219-amino-acid chain; its full sequence is Phosphatidylinositol phosphate synthase (219 aa).

A CDP-1,2-diacyl-sn-glycerol is bound at residue 29–32; sequence NQLT. 2 helical membrane passes run 31-47 and 53-72; these read LTLVSAGLTVGVALLLI and IWAAVLTGLFAAFDMIDGTV. Mg(2+)-binding residues include D66 and D69. The a CDP-1,2-diacyl-sn-glycerol site is built by G70, R74, and T80. 2 residues coordinate Mg(2+): D87 and D91. The Proton acceptor role is filled by D91. 4 helical membrane-spanning segments follow: residues 93-110, 116-133, 154-171, and 177-194; these read ITDGALFGAITWWLVYSY, LVAASLVCLVASQVISYV, RLIVSLVGLGLTGMGVPY, and LWALAAGSIYTVVQRLVM.

The protein belongs to the CDP-alcohol phosphatidyltransferase class-I family. As to quaternary structure, homodimer. Requires Mg(2+) as cofactor.

The protein localises to the cell membrane. The enzyme catalyses a CDP-1,2-diacyl-sn-glycerol + 1D-myo-inositol 3-phosphate = a 1,2-diacyl-sn-glycero-3-phospho-(1D-myo-inositol-3-phosphate) + CMP + H(+). It carries out the reaction 1,2-di-(9Z-octadecenoyl)-sn-glycero-3-cytidine-5'-diphosphate + 1D-myo-inositol 3-phosphate = 1,2-di-(9Z-octadecenoyl)-sn-glycero-3-phospho-(1D-myo-inositol-3-phosphate) + CMP + H(+). Its pathway is phospholipid metabolism; phosphatidylinositol phosphate biosynthesis. In terms of biological role, catalyzes the conjugation of the 1'-hydroxyl group of D-myo-inositol-3-phosphate (also named L-myo-inositol-1-phosphate) with a lipid tail of cytidine diphosphate diacylglycerol (CDP-DAG), forming phosphatidylinositol phosphate (PIP) and CMP. PIP is a precursor of phosphatidylinositol (PI) which is an essential lipid required for cell wall formation. The polypeptide is Phosphatidylinositol phosphate synthase (Corynebacterium glutamicum (strain ATCC 13032 / DSM 20300 / JCM 1318 / BCRC 11384 / CCUG 27702 / LMG 3730 / NBRC 12168 / NCIMB 10025 / NRRL B-2784 / 534)).